The primary structure comprises 254 residues: Triosephosphate isomerase (254 aa).

12-14 (NWK) lines the substrate pocket. Histidine 99 functions as the Electrophile in the catalytic mechanism. Glutamate 169 acts as the Proton acceptor in catalysis. Residues glycine 175, serine 214, and 235–236 (GG) each bind substrate.

Belongs to the triosephosphate isomerase family. Homodimer.

It is found in the cytoplasm. It carries out the reaction D-glyceraldehyde 3-phosphate = dihydroxyacetone phosphate. Its pathway is carbohydrate biosynthesis; gluconeogenesis. It participates in carbohydrate degradation; glycolysis; D-glyceraldehyde 3-phosphate from glycerone phosphate: step 1/1. Its function is as follows. Involved in the gluconeogenesis. Catalyzes stereospecifically the conversion of dihydroxyacetone phosphate (DHAP) to D-glyceraldehyde-3-phosphate (G3P). This chain is Triosephosphate isomerase, found in Bartonella henselae (strain ATCC 49882 / DSM 28221 / CCUG 30454 / Houston 1) (Rochalimaea henselae).